A 377-amino-acid polypeptide reads, in one-letter code: MGLKMSESAKPYFAMVCLQFGYAGMNLVTKVVLDRGMSHYVLVAYRNAFATAAIAPFALLSERKVRPKMTFPIFMQIFVLALLGPLIDQNLYYAGLKLTSPTFAGAVTNIVPALTFIISIICRMEKVEMRKVRFQAKVVGTLVIVVGAMLMILFKIPLITFLRSHLTGHALSPAGEDYLKATVFLLIASFSWASFFVLQAATLKRYSSHLSLSTMVCFMGTLQSTALTFVMEPNLSAWNIGFDMNLLASAYAGIMSSSIAYYVQGMMTKQKSVIFVTAFNPLVVIIGSIIGFLILNQTLNLGGVLGMAILVVGVCTVLWGKEGDIDEEENIEEKFVEIVKCCNRCDIKVLSMMPRIDEEVDVEMQSAGTAKVAVGFS.

The next 10 helical transmembrane spans lie at 13–33, 40–60, 67–87, 102–122, 142–162, 183–203, 210–230, 235–255, 274–294, and 299–319; these read FAMV…KVVL, YVLV…FALL, PKMT…GPLI, TFAG…SIIC, LVIV…ITFL, VFLL…AATL, LSLS…LTFV, LSAW…AGIM, IFVT…GFLI, and LNLG…TVLW. EamA domains lie at 22 to 152 and 190 to 318; these read YAGM…MLMI and FSWA…CTVL.

This sequence belongs to the drug/metabolite transporter (DMT) superfamily. Plant drug/metabolite exporter (P-DME) (TC 2.A.7.4) family.

Its subcellular location is the membrane. The polypeptide is WAT1-related protein At3g56620 (Arabidopsis thaliana (Mouse-ear cress)).